We begin with the raw amino-acid sequence, 201 residues long: MAIILPELPYAYDALEPYIDAETMHLHHDKHHQTYVNNANAALEKHPEIGEDLEALLADVESIPADIRQALINNGGGHLNHALFWELMTPEKTAPSAELAAAIDATFGSFEEFQAAFTAAATTRFGSGWAWLVVNKEGKLEVTSTANQDTPISEGKKPILGLDVWEHAYYVKYRNVRPDYIKAFFSVINWNKVDELYAAAK.

The Mn(2+) site is built by H27, H81, D163, and H167.

The protein belongs to the iron/manganese superoxide dismutase family. In terms of assembly, homodimer. Requires Mn(2+) as cofactor.

It catalyses the reaction 2 superoxide + 2 H(+) = H2O2 + O2. Functionally, destroys superoxide anion radicals which are normally produced within the cells and which are toxic to biological systems. May play a critical role against oxidative stress, affecting both the survival and the virulence of S.pneumoniae. The protein is Superoxide dismutase [Mn] (sodA) of Streptococcus pneumoniae serotype 4 (strain ATCC BAA-334 / TIGR4).